Reading from the N-terminus, the 246-residue chain is Probable transcriptional regulatory protein ASA_2843 (246 aa).

This sequence belongs to the TACO1 family.

The protein localises to the cytoplasm. This chain is Probable transcriptional regulatory protein ASA_2843, found in Aeromonas salmonicida (strain A449).